Consider the following 374-residue polypeptide: Histidinol-phosphate aminotransferase (374 aa).

At Lys-211 the chain carries N6-(pyridoxal phosphate)lysine. The segment covering 351-368 (GNSSQDSASKSNSSANND) has biased composition (low complexity). The disordered stretch occupies residues 351–374 (GNSSQDSASKSNSSANNDELNASN).

The protein belongs to the class-II pyridoxal-phosphate-dependent aminotransferase family. Histidinol-phosphate aminotransferase subfamily. As to quaternary structure, homodimer. The cofactor is pyridoxal 5'-phosphate.

The enzyme catalyses L-histidinol phosphate + 2-oxoglutarate = 3-(imidazol-4-yl)-2-oxopropyl phosphate + L-glutamate. Its pathway is amino-acid biosynthesis; L-histidine biosynthesis; L-histidine from 5-phospho-alpha-D-ribose 1-diphosphate: step 7/9. This is Histidinol-phosphate aminotransferase from Photobacterium profundum (strain SS9).